Reading from the N-terminus, the 331-residue chain is Adenosine deaminase (331 aa).

The Zn(2+) site is built by histidine 12 and histidine 14. Positions 14, 16, and 170 each coordinate substrate. A Zn(2+)-binding site is contributed by histidine 197. The active-site Proton donor is glutamate 200. Aspartate 278 serves as a coordination point for Zn(2+). Aspartate 279 contacts substrate.

It belongs to the metallo-dependent hydrolases superfamily. Adenosine and AMP deaminases family. Adenosine deaminase subfamily. Zn(2+) serves as cofactor.

It catalyses the reaction adenosine + H2O + H(+) = inosine + NH4(+). It carries out the reaction 2'-deoxyadenosine + H2O + H(+) = 2'-deoxyinosine + NH4(+). Catalyzes the hydrolytic deamination of adenosine and 2-deoxyadenosine. The chain is Adenosine deaminase from Shewanella putrefaciens (strain CN-32 / ATCC BAA-453).